The sequence spans 260 residues: Exosome complex component Rrp4 (260 aa).

Positions 59–128 constitute an S1 motif domain; the sequence is NDVVIGIVIV…SSMKVELALR (70 aa). A KH domain is found at 136–194; it reads KTGQIIKVESVKVPRVIGHGGSMISMLKKETNCSIFVGQNGRIWIDGKDEDIELLSKAL.

The protein belongs to the RRP4 family. In terms of assembly, component of the archaeal exosome complex. Forms a trimer of Rrp4 and/or Csl4 subunits. The trimer associates with a hexameric ring-like arrangement composed of 3 Rrp41-Rrp42 heterodimers.

The protein localises to the cytoplasm. Its function is as follows. Non-catalytic component of the exosome, which is a complex involved in RNA degradation. Increases the RNA binding and the efficiency of RNA degradation. Confers strong poly(A) specificity to the exosome. In Methanosarcina acetivorans (strain ATCC 35395 / DSM 2834 / JCM 12185 / C2A), this protein is Exosome complex component Rrp4.